The following is a 413-amino-acid chain: Arginine biosynthesis bifunctional protein ArgJ (413 aa).

Thr158, Lys184, Thr195, Glu285, Asn408, and Ser413 together coordinate substrate. Catalysis depends on Thr195, which acts as the Nucleophile.

This sequence belongs to the ArgJ family. Heterotetramer of two alpha and two beta chains.

It is found in the cytoplasm. The catalysed reaction is N(2)-acetyl-L-ornithine + L-glutamate = N-acetyl-L-glutamate + L-ornithine. It catalyses the reaction L-glutamate + acetyl-CoA = N-acetyl-L-glutamate + CoA + H(+). It functions in the pathway amino-acid biosynthesis; L-arginine biosynthesis; L-ornithine and N-acetyl-L-glutamate from L-glutamate and N(2)-acetyl-L-ornithine (cyclic): step 1/1. The protein operates within amino-acid biosynthesis; L-arginine biosynthesis; N(2)-acetyl-L-ornithine from L-glutamate: step 1/4. In terms of biological role, catalyzes two activities which are involved in the cyclic version of arginine biosynthesis: the synthesis of N-acetylglutamate from glutamate and acetyl-CoA as the acetyl donor, and of ornithine by transacetylation between N(2)-acetylornithine and glutamate. The protein is Arginine biosynthesis bifunctional protein ArgJ of Mesorhizobium japonicum (strain LMG 29417 / CECT 9101 / MAFF 303099) (Mesorhizobium loti (strain MAFF 303099)).